Consider the following 331-residue polypeptide: Phosphatidylinositol transfer protein 4 (331 aa).

It belongs to the PtdIns transfer protein family. PI transfer class IIA subfamily.

Its function is as follows. Catalyzes the transfer of PtdIns and phosphatidylcholine between membranes. The polypeptide is Phosphatidylinositol transfer protein 4 (pitD) (Dictyostelium discoideum (Social amoeba)).